Here is a 400-residue protein sequence, read N- to C-terminus: Cytohesin-3 (400 aa).

Positions 14-61 (EDLSLEEREELLDIRRRKKELIDDIERLKYEIAEVMTEIDNLTSVEES) form a coiled coil. In terms of domain architecture, SEC7 spans 77–206 (FNMDPKKGIQ…IIMLNTSLHN (130 aa)). A PH domain is found at 264 to 381 (NPDREGWLLK…WMKSIKASIS (118 aa)). Residues 273-281 (KLGGGRVKT), R285, Y296, R306, and N355 each bind a 1,2-diacyl-sn-glycero-3-phospho-(1D-myo-inositol-3,4,5-trisphosphate). The tract at residues 392–400 (RKRRIANKK) is C-terminal autoinhibitory region.

As to quaternary structure, interacts with TAMALIN. Interacts with ARF6. Interacts with FRMD4A. Interacts with FRMD4B. As to expression, almost absent from liver, thymus and peripheral blood lymphocytes.

Its subcellular location is the cytoplasm. The protein localises to the cytosol. It is found in the cell membrane. The protein resides in the cell junction. It localises to the adherens junction. Its subcellular location is the tight junction. Promotes guanine-nucleotide exchange on ARF1 and ARF6. Promotes the activation of ARF factors through replacement of GDP with GTP. Plays a role in the epithelial polarization. This chain is Cytohesin-3, found in Homo sapiens (Human).